The primary structure comprises 193 residues: NAD(P)H-quinone oxidoreductase subunit I (193 aa).

2 consecutive 4Fe-4S ferredoxin-type domains span residues 56 to 85 and 96 to 125; these read GRIH…VDWE and KHYS…MTEE. Positions 65, 68, 71, 75, 105, 108, 111, and 115 each coordinate [4Fe-4S] cluster. The segment at 174–193 is disordered; it reads NLPKGSQRAGQHPEDLVKAE. A compositionally biased stretch (basic and acidic residues) spans 184 to 193; the sequence is QHPEDLVKAE.

Belongs to the complex I 23 kDa subunit family. In terms of assembly, NDH-1 is composed of at least 11 different subunits. Requires [4Fe-4S] cluster as cofactor.

It is found in the cellular thylakoid membrane. The catalysed reaction is a plastoquinone + NADH + (n+1) H(+)(in) = a plastoquinol + NAD(+) + n H(+)(out). It catalyses the reaction a plastoquinone + NADPH + (n+1) H(+)(in) = a plastoquinol + NADP(+) + n H(+)(out). In terms of biological role, NDH-1 shuttles electrons from an unknown electron donor, via FMN and iron-sulfur (Fe-S) centers, to quinones in the respiratory and/or the photosynthetic chain. The immediate electron acceptor for the enzyme in this species is believed to be plastoquinone. Couples the redox reaction to proton translocation, and thus conserves the redox energy in a proton gradient. The polypeptide is NAD(P)H-quinone oxidoreductase subunit I (Synechocystis sp. (strain ATCC 27184 / PCC 6803 / Kazusa)).